Consider the following 371-residue polypeptide: Protein IQ-DOMAIN 7 (371 aa).

A disordered region spans residues 1 to 32 (MGGSGNWIRSLISNRKPVNDQQEKLSDKSSKK). Basic and acidic residues predominate over residues 17-29 (PVNDQQEKLSDKS). 2 consecutive IQ domains span residues 93 to 121 (REWA…AVVR) and 122 to 144 (IQAI…CMQA). The tract at residues 125–141 (IFRGRQVRKQAAVTLRC) is calmodulin-binding. Disordered stretches follow at residues 285 to 308 (SGMS…PVAF) and 327 to 371 (LTQS…SQRS). Composition is skewed to polar residues over residues 297–308 (STSSTSQSPVAF) and 327–341 (LTQS…SGLS).

This sequence belongs to the IQD family. As to quaternary structure, binds to multiple calmodulin (CaM) in the presence of Ca(2+) and CaM-like proteins.

It localises to the nucleus. The protein resides in the nucleus envelope. Its subcellular location is the cytoplasm. It is found in the cytoskeleton. Its function is as follows. May be involved in cooperative interactions with calmodulins or calmodulin-like proteins. Recruits calmodulin proteins to microtubules, thus being a potential scaffold in cellular signaling and trafficking. May associate with nucleic acids and regulate gene expression at the transcriptional or post-transcriptional level. The sequence is that of Protein IQ-DOMAIN 7 from Arabidopsis thaliana (Mouse-ear cress).